Reading from the N-terminus, the 133-residue chain is Small ribosomal subunit protein uS8c (133 aa).

This sequence belongs to the universal ribosomal protein uS8 family. In terms of assembly, part of the 30S ribosomal subunit.

Its subcellular location is the plastid. It localises to the chloroplast. One of the primary rRNA binding proteins, it binds directly to 16S rRNA central domain where it helps coordinate assembly of the platform of the 30S subunit. This chain is Small ribosomal subunit protein uS8c (rps8), found in Pyropia yezoensis (Susabi-nori).